We begin with the raw amino-acid sequence, 365 residues long: Phosphate acyltransferase (365 aa).

It belongs to the PlsX family. In terms of assembly, homodimer. Probably interacts with PlsY.

The protein resides in the cytoplasm. The enzyme catalyses a fatty acyl-[ACP] + phosphate = an acyl phosphate + holo-[ACP]. It functions in the pathway lipid metabolism; phospholipid metabolism. Functionally, catalyzes the reversible formation of acyl-phosphate (acyl-PO(4)) from acyl-[acyl-carrier-protein] (acyl-ACP). This enzyme utilizes acyl-ACP as fatty acyl donor, but not acyl-CoA. The protein is Phosphate acyltransferase of Picosynechococcus sp. (strain ATCC 27264 / PCC 7002 / PR-6) (Agmenellum quadruplicatum).